Reading from the N-terminus, the 47-residue chain is Potassium channel toxin TcoKIK (47 aa).

Residues 14-47 (EYACPAIDKFCEDHCAAKKAVGKCDDFKCNCIKL) form the BetaSPN-type CS-alpha/beta domain. 3 disulfide bridges follow: Cys-17/Cys-37, Cys-24/Cys-42, and Cys-28/Cys-44.

Belongs to the long chain scorpion toxin family. Class 2 subfamily. In terms of tissue distribution, expressed by the venom gland.

The protein resides in the secreted. It localises to the target cell membrane. In terms of biological role, blocks voltage-gated potassium channels. Its application (10 uM) to cells recombinantly expressing channels results in membrane damage and cell lysis. The protein is Potassium channel toxin TcoKIK of Tityus costatus (Brazilian scorpion).